The sequence spans 442 residues: MSKTYHFIGIKGSGMSALALMLHQMGHKVQGSDVEKYYFTQRGLEQAGITILPFSEDNITPDMELIVGNAFRENNKEVAYALRHQIPFKRYHDFLGDFMKSFISFAVAGAHGKTSTTGLLSHVLKNITDTSYLIGDGTGRGSANAQYFVFESDEYERHFMPYHPEYSIITNIDFDHPDYFTGIADVRNAFNDYAKQVKKALFVYGEDDELKKIEAPAPIYYYGFEEGNDFIAYDITRTTNGSDFKVKHQGEVIGQFHVPAYGKHNILNATAVIANLFVAGIDTALVADHLKTFSGVKRRFTEKIINDTIIIDDFAHHPTEIVATIDAARQKYPSKEIVAIFQPHTFTRTIALLEDFACALNEADSVYLAQIYGSAREVDKGEVKVEDLAAKIIKPSQVVTVENVSPLLDHDNAVYVFMGAGDIQLYEHSFEELLANLTKNNQ.

109–115 (GAHGKTS) provides a ligand contact to ATP.

Belongs to the MurCDEF family.

The protein resides in the cytoplasm. It carries out the reaction UDP-N-acetyl-alpha-D-muramate + L-alanine + ATP = UDP-N-acetyl-alpha-D-muramoyl-L-alanine + ADP + phosphate + H(+). It participates in cell wall biogenesis; peptidoglycan biosynthesis. Its function is as follows. Cell wall formation. The polypeptide is UDP-N-acetylmuramate--L-alanine ligase (Streptococcus pyogenes serotype M28 (strain MGAS6180)).